The sequence spans 73 residues: MKKILSYLLLLPVYFYRGYISPMTPPSCRFVPTCSEYAIEAIKKHGPFKGLYLAVRRILRCHPWGGSGYDPVP.

This sequence belongs to the UPF0161 family.

The protein resides in the cell inner membrane. In terms of biological role, could be involved in insertion of integral membrane proteins into the membrane. The sequence is that of Putative membrane protein insertion efficiency factor from Phocaeicola vulgatus (strain ATCC 8482 / DSM 1447 / JCM 5826 / CCUG 4940 / NBRC 14291 / NCTC 11154) (Bacteroides vulgatus).